Here is a 194-residue protein sequence, read N- to C-terminus: Cyclin-dependent kinase inhibitor 4 (194 aa).

Over residues 49–58 the composition is skewed to basic and acidic residues; it reads LELRSRRLEK. 2 disordered regions span residues 49 to 70 and 107 to 139; these read LELR…PRRR and TRET…SHCK.

This sequence belongs to the CDI family. ICK/KRP subfamily.

The protein is Cyclin-dependent kinase inhibitor 4 (KRP4) of Oryza sativa subsp. japonica (Rice).